Here is a 740-residue protein sequence, read N- to C-terminus: Platelet endothelial cell adhesion molecule (740 aa).

An N-terminal signal peptide occupies residues 1-27 (MRLRWTQGGNMWLGVLLTLQLCSSLEG). At 28 to 602 (QENSFTINSI…VRVYLAPWKK (575 aa)) the chain is on the extracellular side. 3 consecutive Ig-like C2-type domains span residues 35–126 (NSIH…YKVV), 145–223 (GGVV…DSVR), and 236–315 (PKFH…SKVS). N-linked (GlcNAc...) asparagine glycans are attached at residues Asn-52 and Asn-84. 3 disulfide bridges follow: Cys-57–Cys-109, Cys-152–Cys-206, and Cys-256–Cys-304. N-linked (GlcNAc...) asparagine glycans are attached at residues Asn-284, Asn-301, Asn-320, Asn-357, Asn-372, Asn-436, Asn-456, and Asn-552. Ig-like C2-type domains are found at residues 328–404 (PKLK…VQIA), 425–494 (GQTI…KVLR), and 500–592 (PVEE…NILA). Intrachain disulfides connect Cys-347–Cys-387, Cys-432–Cys-477, and Cys-524–Cys-573. A helical membrane pass occupies residues 603–621 (GLIAVVVIAVIIAVLLLGA). Residues 622 to 740 (RFYFLKKSKA…SRTEGSLDGT (119 aa)) are Cytoplasmic-facing. 2 consecutive short sequence motifs (ITIM motif) follow at residues 690–695 (VEYTEV) and 713–718 (TVYSEI). 2 positions are modified to phosphotyrosine; by FER: Tyr-692 and Tyr-715. The disordered stretch occupies residues 697-740 (VTSPEPHRGLGTKGTETVYSEIRKADPDLVENRYSRTEGSLDGT). The membrane-bound segment which detaches upon phosphorylation stretch occupies residues 711-731 (TETVYSEIRKADPDLVENRYS). The span at 717 to 732 (EIRKADPDLVENRYSR) shows a compositional bias: basic and acidic residues. The may play a role in cytoprotective signaling stretch occupies residues 723-740 (PDLVENRYSRTEGSLDGT). Ser-731 and Ser-736 each carry phosphoserine.

Trans-homodimer (via Ig-like C2-type 1 and Ig-like C2-type 2 domains); trans-homodimerization is required for cell-cell interaction. Forms a complex with BDKRB2 and GNAQ. Interacts with BDKRB2 and GNAQ. Interacts with PTPN11; Tyr-715 is critical for PTPN11 recruitment. Interacts with FER. Interacts with CD177; the interaction is Ca(2+)-dependent; the interaction is direct. In terms of processing, phosphorylated on Ser and Tyr residues by src kinases after cellular activation. Upon activation, phosphorylated on Ser-731 which probably initiates the dissociation of the membrane-interaction segment (residues 711-731) from the cell membrane allowing the sequential phosphorylation of Tyr-715 and Tyr-692. Constitutively phosphorylated on Ser-736 in resting platelets. Phosphorylated on tyrosine residues by FER and FES in response to FCER1 activation. In endothelial cells Fyn mediates mechanical-force (stretch or pull) induced tyrosine phosphorylation. Post-translationally, palmitoylation by ZDHHC21 is necessary for cell surface expression in endothelial cells and enrichment in membrane rafts.

The protein localises to the cell membrane. Its subcellular location is the membrane raft. The protein resides in the cell junction. Its function is as follows. Cell adhesion molecule which is required for leukocyte transendothelial migration (TEM) under most inflammatory conditions. Tyr-692 plays a critical role in TEM and is required for efficient trafficking of PECAM1 to and from the lateral border recycling compartment (LBRC) and is also essential for the LBRC membrane to be targeted around migrating leukocytes. Trans-homophilic interaction may play a role in endothelial cell-cell adhesion via cell junctions. Heterophilic interaction with CD177 plays a role in transendothelial migration of neutrophils. Homophilic ligation of PECAM1 prevents macrophage-mediated phagocytosis of neighboring viable leukocytes by transmitting a detachment signal. Promotes macrophage-mediated phagocytosis of apoptotic leukocytes by tethering them to the phagocytic cells; PECAM1-mediated detachment signal appears to be disabled in apoptotic leukocytes. Modulates bradykinin receptor BDKRB2 activation. Regulates bradykinin- and hyperosmotic shock-induced ERK1/2 activation in endothelial cells. Induces susceptibility to atherosclerosis. The protein is Platelet endothelial cell adhesion molecule (PECAM1) of Sus scrofa (Pig).